A 419-amino-acid chain; its full sequence is Variant surface glycoprotein YnAT 1.1 (419 aa).

The first 28 residues, 1-28, serve as a signal peptide directing secretion; the sequence is MKRVLSNVLKAWIFTIVAFHNFSTSVTA. Asparagine 82 and asparagine 358 each carry an N-linked (GlcNAc...) asparagine glycan. The interval 369–405 is disordered; it reads ESSRPPSTDANTSQKGPLQRPEKSGESSHLPSGSSHG. Residues 372-384 show a composition bias toward polar residues; the sequence is RPPSTDANTSQKG. N-linked (GlcNAc...) (high mannose) asparagine glycosylation is present at asparagine 379. A compositionally biased stretch (low complexity) spans 395–405; sequence SSHLPSGSSHG. A lipid anchor (GPI-anchor amidated serine) is attached at serine 400. A propeptide spans 401 to 419 (removed in mature form); it reads GSSHGTKAIRSILHVALLM.

The protein localises to the cell membrane. Its function is as follows. VSG forms a coat on the surface of the parasite. The trypanosome evades the immune response of the host by expressing a series of antigenically distinct VSGs from an estimated 1000 VSG genes. This Trypanosoma congolense protein is Variant surface glycoprotein YnAT 1.1.